We begin with the raw amino-acid sequence, 163 residues long: MPSFDIVSEITMHEVNNAVENANRILSTRYDFRGVEAVIELNEKNETIKLTTESDFQLEQLIEILIGACIKRNIDSTSLDIPTESEHHGKLYSKEVKLKQGIETETAKKITKLIKDSKLKVQTQIQGEQVRVTGKSRDDLQAAIQLVKGAELGQPFQFNNFRD.

Belongs to the YajQ family.

Its function is as follows. Nucleotide-binding protein. In Mannheimia succiniciproducens (strain KCTC 0769BP / MBEL55E), this protein is Nucleotide-binding protein MS1759.